Here is a 539-residue protein sequence, read N- to C-terminus: Chaperonin GroEL 1 (539 aa).

ATP contacts are provided by residues 29-32 (TLGP), 86-90 (DGTTT), Gly413, 478-480 (NAA), and Asp494.

It belongs to the chaperonin (HSP60) family. As to quaternary structure, forms a cylinder of 14 subunits composed of two heptameric rings stacked back-to-back. Interacts with the co-chaperonin GroES.

The protein resides in the cytoplasm. It carries out the reaction ATP + H2O + a folded polypeptide = ADP + phosphate + an unfolded polypeptide.. Its function is as follows. Together with its co-chaperonin GroES, plays an essential role in assisting protein folding. The GroEL-GroES system forms a nano-cage that allows encapsulation of the non-native substrate proteins and provides a physical environment optimized to promote and accelerate protein folding. The protein is Chaperonin GroEL 1 of Corynebacterium diphtheriae (strain ATCC 700971 / NCTC 13129 / Biotype gravis).